A 371-amino-acid polypeptide reads, in one-letter code: Transaldolase (371 aa).

The active-site Schiff-base intermediate with substrate is K140.

The protein belongs to the transaldolase family. Type 2 subfamily.

The protein localises to the cytoplasm. The catalysed reaction is D-sedoheptulose 7-phosphate + D-glyceraldehyde 3-phosphate = D-erythrose 4-phosphate + beta-D-fructose 6-phosphate. It participates in carbohydrate degradation; pentose phosphate pathway; D-glyceraldehyde 3-phosphate and beta-D-fructose 6-phosphate from D-ribose 5-phosphate and D-xylulose 5-phosphate (non-oxidative stage): step 2/3. Its function is as follows. Transaldolase is important for the balance of metabolites in the pentose-phosphate pathway. This Frankia alni (strain DSM 45986 / CECT 9034 / ACN14a) protein is Transaldolase.